The following is a 311-amino-acid chain: L-lactate dehydrogenase 2 (311 aa).

Residues Val-14, Asp-35, and Arg-40 each contribute to the NAD(+) site. Arg-90 contacts substrate. NAD(+)-binding positions include Ser-103, 120–122 (ATN), and Thr-145. Residue 122-125 (NPCD) coordinates substrate. 150 to 153 (DTTR) is a binding site for substrate. His-177 (proton acceptor) is an active-site residue. Thr-230 contacts substrate.

Belongs to the LDH/MDH superfamily. LDH family. As to quaternary structure, homotetramer.

The protein resides in the cytoplasm. It catalyses the reaction (S)-lactate + NAD(+) = pyruvate + NADH + H(+). It functions in the pathway fermentation; pyruvate fermentation to lactate; (S)-lactate from pyruvate: step 1/1. In terms of biological role, catalyzes the conversion of lactate to pyruvate. This chain is L-lactate dehydrogenase 2, found in Listeria innocua serovar 6a (strain ATCC BAA-680 / CLIP 11262).